The chain runs to 37 residues: Diuretic hormone 1 (37 aa).

It belongs to the sauvagine/corticotropin-releasing factor/urotensin I family.

It is found in the secreted. Functionally, stimulates fluid secretion by the Malpighian tubules. Increases cyclic AMP production. The chain is Diuretic hormone 1 from Tenebrio molitor (Yellow mealworm beetle).